The primary structure comprises 162 residues: Interleukin-15 (162 aa).

The N-terminal stretch at 1-29 (MRISKPHLRITSIQCYVCLLLNTHFLTEA) is a signal peptide. Positions 30-48 (GIRVFILGCISAGIPKTEA) are excised as a propeptide. 2 cysteine pairs are disulfide-bonded: Cys-83/Cys-133 and Cys-90/Cys-136. Asn-119, Asn-127, and Asn-143 each carry an N-linked (GlcNAc...) asparagine glycan.

Belongs to the IL-15/IL-21 family.

The protein resides in the secreted. Its function is as follows. Cytokine that plays a major role in the development of inflammatory and protective immune responses to microbial invaders and parasites by modulating immune cells of both the innate and adaptive immune systems. Stimulates the proliferation of natural killer cells, T-cells and B-cells and promotes the secretion of several cytokines. In monocytes, induces the production of IL8 and monocyte chemotactic protein 1/CCL2, two chemokines that attract neutrophils and monocytes respectively to sites of infection. Unlike most cytokines, which are secreted in soluble form, IL15 is expressed in association with its high affinity IL15RA on the surface of IL15-producing cells and delivers signals to target cells that express IL2RB and IL2RG receptor subunits. Binding to its receptor triggers the phosphorylation of JAK1 and JAK3 and the recruitment and subsequent phosphorylation of signal transducer and activator of transcription-3/STAT3 and STAT5. In mast cells, induces the rapid tyrosine phosphorylation of STAT6 and thereby controls mast cell survival and release of cytokines such as IL4. The chain is Interleukin-15 (IL15) from Marmota monax (Woodchuck).